A 331-amino-acid chain; its full sequence is Biotin synthase (331 aa).

One can recognise a Radical SAM core domain in the interval 53–271 (TELQLSQLLS…IAVARIVCPK (219 aa)). Residues Cys68, Cys72, and Cys75 each contribute to the [4Fe-4S] cluster site. [2Fe-2S] cluster contacts are provided by Cys112, Cys143, Cys203, and Arg275.

Belongs to the radical SAM superfamily. Biotin synthase family. Homodimer. It depends on [4Fe-4S] cluster as a cofactor. [2Fe-2S] cluster serves as cofactor.

The enzyme catalyses (4R,5S)-dethiobiotin + (sulfur carrier)-SH + 2 reduced [2Fe-2S]-[ferredoxin] + 2 S-adenosyl-L-methionine = (sulfur carrier)-H + biotin + 2 5'-deoxyadenosine + 2 L-methionine + 2 oxidized [2Fe-2S]-[ferredoxin]. It functions in the pathway cofactor biosynthesis; biotin biosynthesis; biotin from 7,8-diaminononanoate: step 2/2. In terms of biological role, catalyzes the conversion of dethiobiotin (DTB) to biotin by the insertion of a sulfur atom into dethiobiotin via a radical-based mechanism. The polypeptide is Biotin synthase (Phenylobacterium zucineum (strain HLK1)).